The chain runs to 553 residues: Chaperonin GroEL 2 (553 aa).

ATP contacts are provided by residues threonine 29 to proline 32, aspartate 86 to threonine 90, glycine 414, and aspartate 495.

It belongs to the chaperonin (HSP60) family. As to quaternary structure, forms a cylinder of 14 subunits composed of two heptameric rings stacked back-to-back. Interacts with the co-chaperonin GroES.

Its subcellular location is the cytoplasm. It carries out the reaction ATP + H2O + a folded polypeptide = ADP + phosphate + an unfolded polypeptide.. Functionally, together with its co-chaperonin GroES, plays an essential role in assisting protein folding. The GroEL-GroES system forms a nano-cage that allows encapsulation of the non-native substrate proteins and provides a physical environment optimized to promote and accelerate protein folding. The sequence is that of Chaperonin GroEL 2 from Gloeobacter violaceus (strain ATCC 29082 / PCC 7421).